Reading from the N-terminus, the 292-residue chain is Ribosomal RNA small subunit methyltransferase A (292 aa).

S-adenosyl-L-methionine contacts are provided by Asn-28, Leu-30, Gly-55, Glu-76, Asp-101, and Asn-126.

The protein belongs to the class I-like SAM-binding methyltransferase superfamily. rRNA adenine N(6)-methyltransferase family. RsmA subfamily.

It is found in the cytoplasm. The enzyme catalyses adenosine(1518)/adenosine(1519) in 16S rRNA + 4 S-adenosyl-L-methionine = N(6)-dimethyladenosine(1518)/N(6)-dimethyladenosine(1519) in 16S rRNA + 4 S-adenosyl-L-homocysteine + 4 H(+). Its function is as follows. Specifically dimethylates two adjacent adenosines (A1518 and A1519) in the loop of a conserved hairpin near the 3'-end of 16S rRNA in the 30S particle. May play a critical role in biogenesis of 30S subunits. The protein is Ribosomal RNA small subunit methyltransferase A of Bacillus cytotoxicus (strain DSM 22905 / CIP 110041 / 391-98 / NVH 391-98).